The primary structure comprises 466 residues: Cytochrome c-552 (466 aa).

The signal sequence occupies residues 1–27 (MVRILTKKSFALSALVAASLMASGAMA). His-87 provides a ligand contact to heme c. Residues Cys-115, Cys-118, and Lys-119 each coordinate heme. Cys-153, Cys-156, His-157, Cys-195, Cys-198, and His-199 together coordinate heme c. Residues Glu-201, Tyr-202, Lys-250, and Gln-252 each coordinate Ca(2+). Tyr-202 contributes to the substrate binding site. His-253 serves as a coordination point for substrate. His-264, Cys-271, Cys-274, His-275, His-290, Cys-303, Cys-306, His-307, and His-382 together coordinate heme c.

The protein belongs to the cytochrome c-552 family. The cofactor is Ca(2+). Heme c serves as cofactor.

The protein localises to the periplasm. The enzyme catalyses 6 Fe(III)-[cytochrome c] + NH4(+) + 2 H2O = 6 Fe(II)-[cytochrome c] + nitrite + 8 H(+). It functions in the pathway nitrogen metabolism; nitrate reduction (assimilation). Its function is as follows. Catalyzes the reduction of nitrite to ammonia, consuming six electrons in the process. In Shewanella woodyi (strain ATCC 51908 / MS32), this protein is Cytochrome c-552.